The following is a 633-amino-acid chain: Threonine--tRNA ligase (633 aa).

A TGS domain is found at 1–61; that stretch reads MINITLPDGS…DHDASLRIIT (61 aa). A catalytic region spans residues 243 to 534; it reads DHRRIGKQQD…LIEHHAGQFP (292 aa). 3 residues coordinate Zn(2+): Cys334, His385, and His511.

This sequence belongs to the class-II aminoacyl-tRNA synthetase family. As to quaternary structure, homodimer. The cofactor is Zn(2+).

It is found in the cytoplasm. The enzyme catalyses tRNA(Thr) + L-threonine + ATP = L-threonyl-tRNA(Thr) + AMP + diphosphate + H(+). Its function is as follows. Catalyzes the attachment of threonine to tRNA(Thr) in a two-step reaction: L-threonine is first activated by ATP to form Thr-AMP and then transferred to the acceptor end of tRNA(Thr). Also edits incorrectly charged L-seryl-tRNA(Thr). In Stenotrophomonas maltophilia (strain R551-3), this protein is Threonine--tRNA ligase.